Reading from the N-terminus, the 180-residue chain is Probable chorismate pyruvate-lyase (180 aa).

Substrate contacts are provided by Arg-82, Leu-120, and Glu-165.

It belongs to the UbiC family.

It localises to the cytoplasm. It carries out the reaction chorismate = 4-hydroxybenzoate + pyruvate. The protein operates within cofactor biosynthesis; ubiquinone biosynthesis. Removes the pyruvyl group from chorismate, with concomitant aromatization of the ring, to provide 4-hydroxybenzoate (4HB) for the ubiquinone pathway. This Photobacterium profundum (strain SS9) protein is Probable chorismate pyruvate-lyase.